A 164-amino-acid polypeptide reads, in one-letter code: HTH-type transcriptional regulator IscR (164 aa).

Residues 2 to 131 (RLTSKGRYAV…NNITLAELVN (130 aa)) enclose the HTH rrf2-type domain. Residues 28–51 (LADISERQGISLSYLEQLFSRLRK) constitute a DNA-binding region (H-T-H motif). Residues Cys92, Cys98, and Cys104 each coordinate [2Fe-2S] cluster. Residues Cys92, Cys98, and Cys104 each contribute to the a metal cation site. Residues 145–164 (DTRRTANGRPQETINVNLRA) are disordered. The span at 152–164 (GRPQETINVNLRA) shows a compositional bias: polar residues.

The cofactor is [2Fe-2S] cluster.

In terms of biological role, regulates the transcription of several operons and genes involved in the biogenesis of Fe-S clusters and Fe-S-containing proteins. This Serratia proteamaculans (strain 568) protein is HTH-type transcriptional regulator IscR.